A 129-amino-acid chain; its full sequence is Protein NrdI (129 aa).

This sequence belongs to the NrdI family.

Functionally, probably involved in ribonucleotide reductase function. This Macrococcus caseolyticus (strain JCSC5402) (Macrococcoides caseolyticum) protein is Protein NrdI.